Consider the following 222-residue polypeptide: Beta-casein (222 aa).

An N-terminal signal peptide occupies residues 1-15; sequence MKVLILACLVALAIA. Thr-27 is modified (phosphothreonine). Ser-30, Ser-32, Ser-33, and Ser-34 each carry phosphoserine.

This sequence belongs to the beta-casein family. In terms of tissue distribution, mammary gland specific. Secreted in milk.

The protein localises to the secreted. Important role in determination of the surface properties of the casein micelles. This chain is Beta-casein (CSN2), found in Capra hircus (Goat).